A 325-amino-acid chain; its full sequence is E3 ubiquitin-protein ligase SIAH2 (325 aa).

Residues Met-1 to Cys-15 are compositionally biased toward polar residues. Positions Met-1–Gly-43 are disordered. The residue at position 6 (Ser-6) is a Phosphoserine. The residue at position 16 (Ser-16) is a Phosphoserine; by DYRK2. Residues Lys-17–Pro-33 show a composition bias toward pro residues. Thr-24 bears the Phosphothreonine; by MAPK14 mark. Ser-29 carries the phosphoserine; by DYRK2 and MAPK14 modification. Positions Pro-34 to Gly-43 are enriched in low complexity. Ser-69 carries the post-translational modification Phosphoserine; by DYRK2. An RING-type zinc finger spans residues Cys-81–Arg-116. Thr-120 bears the Phosphothreonine; by DYRK2 mark. Residues Val-131 to Cys-323 are SBD. The segment at Ala-134–Lys-194 adopts an SIAH-type zinc-finger fold. Residues Cys-139, Cys-146, His-158, Cys-162, Cys-169, Cys-176, His-188, and His-193 each coordinate Zn(2+).

This sequence belongs to the SINA (Seven in absentia) family. In terms of assembly, homodimer. Interacts with UBE2E2. Interacts with VAV1, without mediating its ubiquitin-mediated degradation. Interacts with CACYBP/SIP. Probable component of some large E3 complex possibly composed of UBE2D1, SIAH2, CACYBP/SIP, SKP1, APC and TBL1X. Interacts with UBE2I. Interacts with PEG10, which may inhibit its activity. Interacts with EGLN2 and SNCAIP. Interacts with DYRK2. Interacts with PEG3. Interacts with NR1D1 and NR1D2. Interacts with DCC. Interacts with AXIN1. In terms of processing, phosphorylated at Ser-29 by DYRK2; this increases the ubiquitin ligase activity and promotes degradation of EGLN3. Phosphorylated at Thr-24 and Ser-29 by MAPK14, which mediates the degradation by the proteasome of EGLN3. Widely expressed at low level in embryos and adults. Expressed in a specific population of germ cells within both the mouse ovary and testis. Absent in primordial oocytes but expressed in all growing oocytes, coincident with their recruitment from the pool of quiescent cells. Its level of expression increases as the oocytes mature. Expressed in Graafian follicles and in fertilized zygotes up until the two cell stage, a time of extensive maternal transcript degradation and zygotic gene activation. Expressed in the testis from postmeiotic spermatids.

It is found in the cytoplasm. It localises to the nucleus. It catalyses the reaction S-ubiquitinyl-[E2 ubiquitin-conjugating enzyme]-L-cysteine + [acceptor protein]-L-lysine = [E2 ubiquitin-conjugating enzyme]-L-cysteine + N(6)-ubiquitinyl-[acceptor protein]-L-lysine.. It participates in protein modification; protein ubiquitination. E3 ubiquitin-protein ligase that mediates ubiquitination and subsequent proteasomal degradation of target proteins. E3 ubiquitin ligases accept ubiquitin from an E2 ubiquitin-conjugating enzyme in the form of a thioester and then directly transfers the ubiquitin to targeted substrates. Mediates E3 ubiquitin ligase activity either through direct binding to substrates or by functioning as the essential RING domain subunit of larger E3 complexes. Mediates ubiquitination and proteasomal degradation of DYRK2 in response to hypoxia. Promotes monoubiquitination of SNCA. Triggers the ubiquitin-mediated degradation of many substrates, including proteins involved in transcription regulation (GPS2, POU2AF1, PML, NCOR1), a cell surface receptor (DCC), an antiapoptotic protein (BAG1), and a protein involved in synaptic vesicle function in neurons (SYP). It is thereby involved in apoptosis, tumor suppression, cell cycle, transcription and signaling processes. Has some overlapping function with SIAH1. Triggers the ubiquitin-mediated degradation of TRAF2, whereas SIAH1 does not. Regulates cellular clock function via ubiquitination of the circadian transcriptional repressors NR1D1 and NR1D2 leading to their proteasomal degradation. Plays an important role in mediating the rhythmic degradation/clearance of NR1D1 and NR1D2 contributing to their circadian profile of protein abundance. Mediates ubiquitination and degradation of EGLN2 and EGLN3 in response to the unfolded protein response (UPR), leading to their degradation and subsequent stabilization of ATF4. Also part of the Wnt signaling pathway in which it mediates the Wnt-induced ubiquitin-mediated proteasomal degradation of AXIN1. In Mus musculus (Mouse), this protein is E3 ubiquitin-protein ligase SIAH2 (Siah2).